Here is a 65-residue protein sequence, read N- to C-terminus: Putative antitoxin VapB7 (65 aa).

The protein belongs to the UPF0165 family.

Its function is as follows. Possibly the antitoxin component of a type II toxin-antitoxin (TA) system. Its cognate toxin is VapC7 (Potential). The sequence is that of Putative antitoxin VapB7 (vapB7) from Archaeoglobus fulgidus (strain ATCC 49558 / DSM 4304 / JCM 9628 / NBRC 100126 / VC-16).